The primary structure comprises 535 residues: Probable bifunctional tRNA threonylcarbamoyladenosine biosynthesis protein (535 aa).

Residues 1–323 are kae1; sequence MICLGLEGTA…YRTDMVEVNW (323 aa). Fe cation is bound by residues histidine 106, histidine 110, and tyrosine 127. L-threonylcarbamoyladenylate contacts are provided by residues 127–131, aspartate 159, glycine 172, glutamate 176, and asparagine 256; that span reads YVSGG. Position 284 (aspartate 284) interacts with Fe cation. One can recognise a Protein kinase domain in the interval 333–535; the sequence is KIPEHLIGKG…DVERRARYVE (203 aa). ATP-binding positions include 339–347 and lysine 360; that span reads IGKGAEADI. Aspartate 451 serves as the catalytic Proton acceptor; for kinase activity.

It in the N-terminal section; belongs to the KAE1 / TsaD family. The protein in the C-terminal section; belongs to the protein kinase superfamily. Tyr protein kinase family. BUD32 subfamily. Component of the KEOPS complex that consists of Kae1, Bud32, Cgi121 and Pcc1; the whole complex dimerizes. Fe(2+) is required as a cofactor.

The protein resides in the cytoplasm. It catalyses the reaction L-seryl-[protein] + ATP = O-phospho-L-seryl-[protein] + ADP + H(+). The enzyme catalyses L-threonyl-[protein] + ATP = O-phospho-L-threonyl-[protein] + ADP + H(+). The catalysed reaction is L-threonylcarbamoyladenylate + adenosine(37) in tRNA = N(6)-L-threonylcarbamoyladenosine(37) in tRNA + AMP + H(+). Activity provided by the Kae1 region seems to be regulated via phosphorylation by the protein kinase Bud32, which is itself activated by Cgi121. Its function is as follows. Required for the formation of a threonylcarbamoyl group on adenosine at position 37 (t(6)A37) in tRNAs that read codons beginning with adenine. Is a component of the KEOPS complex that is probably involved in the transfer of the threonylcarbamoyl moiety of threonylcarbamoyl-AMP (TC-AMP) to the N6 group of A37. The Kae1 domain likely plays a direct catalytic role in this reaction. The Bud32 domain probably displays kinase activity that regulates Kae1 function. In vitro, exhibits low ATPase activity, but does not bind DNA and does not have endonuclease activity. This chain is Probable bifunctional tRNA threonylcarbamoyladenosine biosynthesis protein, found in Methanocaldococcus jannaschii (strain ATCC 43067 / DSM 2661 / JAL-1 / JCM 10045 / NBRC 100440) (Methanococcus jannaschii).